The primary structure comprises 485 residues: Protein disulfide-isomerase 1 (485 aa).

Positions 1–20 (MSLSVSFIFLLVASIGAVVA) are cleaved as a signal peptide. 2 Thioredoxin domains span residues 21–130 (DSEN…KKSG) and 342–470 (YLEG…KYAG). Cystine bridges form between Cys-52–Cys-55 and Cys-393–Cys-396. Active-site nucleophile residues include Cys-393 and Cys-396. A Prevents secretion from ER motif is present at residues 482–485 (HEEL).

Belongs to the protein disulfide isomerase family.

It localises to the endoplasmic reticulum lumen. It catalyses the reaction Catalyzes the rearrangement of -S-S- bonds in proteins.. The chain is Protein disulfide-isomerase 1 (pdi-1) from Caenorhabditis elegans.